The following is a 249-amino-acid chain: Ditrans,polycis-undecaprenyl-diphosphate synthase ((2E,6E)-farnesyl-diphosphate specific) (249 aa).

Residue aspartate 26 is part of the active site. Aspartate 26 is a binding site for Mg(2+). Residues 27–30 (GNGR), tryptophan 31, arginine 39, histidine 43, and 71–73 (SRE) each bind substrate. Asparagine 74 (proton acceptor) is an active-site residue. Residues tryptophan 75, arginine 77, arginine 194, and 200 to 202 (RIS) each bind substrate. Mg(2+) is bound at residue glutamate 213.

It belongs to the UPP synthase family. As to quaternary structure, homodimer. Requires Mg(2+) as cofactor.

The catalysed reaction is 8 isopentenyl diphosphate + (2E,6E)-farnesyl diphosphate = di-trans,octa-cis-undecaprenyl diphosphate + 8 diphosphate. Functionally, catalyzes the sequential condensation of isopentenyl diphosphate (IPP) with (2E,6E)-farnesyl diphosphate (E,E-FPP) to yield (2Z,6Z,10Z,14Z,18Z,22Z,26Z,30Z,34E,38E)-undecaprenyl diphosphate (di-trans,octa-cis-UPP). UPP is the precursor of glycosyl carrier lipid in the biosynthesis of bacterial cell wall polysaccharide components such as peptidoglycan and lipopolysaccharide. The chain is Ditrans,polycis-undecaprenyl-diphosphate synthase ((2E,6E)-farnesyl-diphosphate specific) from Buchnera aphidicola subsp. Schizaphis graminum (strain Sg).